Reading from the N-terminus, the 405-residue chain is uncharacterized protein (405 aa).

Helical transmembrane passes span I19–V39, M48–L68, I85–I105, A106–I126, S129–G149, G156–W176, G178–L198, G224–F244, G252–P272, V283–M303, I309–A329, T344–M364, and W366–L386.

It belongs to the major facilitator superfamily. YhhS family.

The protein localises to the cell inner membrane. This is an uncharacterized protein from Salmonella paratyphi C (strain RKS4594).